A 145-amino-acid polypeptide reads, in one-letter code: Maximins 3/H3 type 1 (145 aa).

The N-terminal stretch at 1–18 is a signal peptide; that stretch reads MNFKYIVAVSFLIASAYA. 2 consecutive propeptides follow at residues 19 to 43 and 74 to 124; these read RSVQ…LREI and RIAE…KEKR. Isoleucine amide is present on I144.

The protein belongs to the bombinin family. As to expression, expressed by the skin glands.

It is found in the secreted. In terms of biological role, maximin-3 shows antibacterial activity against both Gram-positive and Gram-negative bacteria. It also shows antimicrobial activity against the fungus C.albicans, but not against A.flavus nor P.uticale. It has little hemolytic activity. It possess a significant cytotoxicity against tumor cell lines. It possess a significant anti-HIV activity. It shows high spermicidal activity. Functionally, maximin-H3 shows antibacterial activity against both Gram-positive and Gram-negative bacteria. It also shows antimicrobial activity against the fungus C.albicans. Shows strong hemolytic activity. This is Maximins 3/H3 type 1 from Bombina maxima (Giant fire-bellied toad).